A 190-amino-acid chain; its full sequence is Xanthine phosphoribosyltransferase (190 aa).

Residues Leu-20 and Asn-27 each coordinate xanthine. 128 to 132 (ANGKA) lines the 5-phospho-alpha-D-ribose 1-diphosphate pocket. Xanthine is bound at residue Lys-156.

This sequence belongs to the purine/pyrimidine phosphoribosyltransferase family. Xpt subfamily. In terms of assembly, homodimer.

The protein localises to the cytoplasm. It carries out the reaction XMP + diphosphate = xanthine + 5-phospho-alpha-D-ribose 1-diphosphate. It participates in purine metabolism; XMP biosynthesis via salvage pathway; XMP from xanthine: step 1/1. Its function is as follows. Converts the preformed base xanthine, a product of nucleic acid breakdown, to xanthosine 5'-monophosphate (XMP), so it can be reused for RNA or DNA synthesis. The sequence is that of Xanthine phosphoribosyltransferase from Pseudomonas fluorescens (strain SBW25).